The sequence spans 150 residues: UPF0178 protein BamMC406_1579 (150 aa).

It belongs to the UPF0178 family.

The polypeptide is UPF0178 protein BamMC406_1579 (Burkholderia ambifaria (strain MC40-6)).